We begin with the raw amino-acid sequence, 365 residues long: GTPase Obg (365 aa).

Residues 1 to 159 (MKFIDEARIE…RMLKLELKVL (159 aa)) enclose the Obg domain. An OBG-type G domain is found at 160-334 (ADVGLLGMPN…LIYAIKDHLQ (175 aa)). GTP-binding positions include 166-173 (GMPNAGKS), 191-195 (FTTLH), 213-216 (DIPG), 284-287 (NKLD), and 315-317 (SAL). Residues Ser173 and Thr193 each coordinate Mg(2+).

Belongs to the TRAFAC class OBG-HflX-like GTPase superfamily. OBG GTPase family. In terms of assembly, monomer. Requires Mg(2+) as cofactor.

The protein localises to the cytoplasm. Its function is as follows. An essential GTPase which binds GTP, GDP and possibly (p)ppGpp with moderate affinity, with high nucleotide exchange rates and a fairly low GTP hydrolysis rate. Plays a role in control of the cell cycle, stress response, ribosome biogenesis and in those bacteria that undergo differentiation, in morphogenesis control. This chain is GTPase Obg, found in Cupriavidus necator (strain ATCC 17699 / DSM 428 / KCTC 22496 / NCIMB 10442 / H16 / Stanier 337) (Ralstonia eutropha).